A 618-amino-acid chain; its full sequence is GMC oxidoreductase family protein Mala s 12 (618 aa).

A signal peptide spans 1 to 23 (MKGIVSWAVVSAALVLSATESLA). Residues valine 129 and valine 280 each coordinate FAD. The Proton donor role is filled by histidine 556. The active-site Proton acceptor is histidine 599.

It belongs to the GMC oxidoreductase family. As to quaternary structure, monomer. FAD is required as a cofactor.

It localises to the secreted. This chain is GMC oxidoreductase family protein Mala s 12, found in Malassezia sympodialis (strain ATCC 42132) (Atopic eczema-associated yeast).